The chain runs to 116 residues: Ribosome-binding factor A (116 aa).

The protein belongs to the RbfA family. In terms of assembly, monomer. Binds 30S ribosomal subunits, but not 50S ribosomal subunits or 70S ribosomes.

Its subcellular location is the cytoplasm. Functionally, one of several proteins that assist in the late maturation steps of the functional core of the 30S ribosomal subunit. Associates with free 30S ribosomal subunits (but not with 30S subunits that are part of 70S ribosomes or polysomes). Required for efficient processing of 16S rRNA. May interact with the 5'-terminal helix region of 16S rRNA. The sequence is that of Ribosome-binding factor A from Streptococcus pneumoniae (strain ATCC 700669 / Spain 23F-1).